Here is a 126-residue protein sequence, read N- to C-terminus: UPF0102 protein Cphamn1_0017 (126 aa).

This sequence belongs to the UPF0102 family.

This Chlorobium phaeobacteroides (strain BS1) protein is UPF0102 protein Cphamn1_0017.